A 66-amino-acid polypeptide reads, in one-letter code: Photosystem II reaction center protein J (66 aa).

Residues 36–56 (LWLVATAGGIAVIFVLGIFFY) form a helical membrane-spanning segment.

The protein belongs to the PsbJ family. As to quaternary structure, PSII is composed of 1 copy each of membrane proteins PsbA, PsbB, PsbC, PsbD, PsbE, PsbF, PsbH, PsbI, PsbJ, PsbK, PsbL, PsbM, PsbT, PsbX, PsbY, Psb30/Ycf12, peripheral proteins PsbO, CyanoQ (PsbQ), PsbU, PsbV and a large number of cofactors. It forms dimeric complexes.

Its subcellular location is the cellular thylakoid membrane. Its function is as follows. One of the components of the core complex of photosystem II (PSII). PSII is a light-driven water:plastoquinone oxidoreductase that uses light energy to abstract electrons from H(2)O, generating O(2) and a proton gradient subsequently used for ATP formation. It consists of a core antenna complex that captures photons, and an electron transfer chain that converts photonic excitation into a charge separation. In Prochlorococcus marinus (strain MIT 9215), this protein is Photosystem II reaction center protein J.